Reading from the N-terminus, the 118-residue chain is Large ribosomal subunit protein bL20 (118 aa).

This sequence belongs to the bacterial ribosomal protein bL20 family.

Functionally, binds directly to 23S ribosomal RNA and is necessary for the in vitro assembly process of the 50S ribosomal subunit. It is not involved in the protein synthesizing functions of that subunit. This chain is Large ribosomal subunit protein bL20, found in Trichodesmium erythraeum (strain IMS101).